Reading from the N-terminus, the 149-residue chain is Large-conductance mechanosensitive channel (149 aa).

Helical transmembrane passes span 8–28 and 74–94; these read FIMR…SAFT and IGSV…LFLI.

This sequence belongs to the MscL family. In terms of assembly, homopentamer.

It is found in the cell membrane. Channel that opens in response to stretch forces in the membrane lipid bilayer. May participate in the regulation of osmotic pressure changes within the cell. The sequence is that of Large-conductance mechanosensitive channel from Enterococcus faecalis (strain ATCC 700802 / V583).